The primary structure comprises 127 residues: Fluoride-specific ion channel FluC (127 aa).

Helical transmembrane passes span 4–24 (LLLA…LLSM), 35–55 (LGTL…FAWF), 71–91 (TGFC…VFLL), and 103–123 (VFVN…LFSA). 2 residues coordinate Na(+): Gly75 and Thr78.

It belongs to the fluoride channel Fluc/FEX (TC 1.A.43) family.

The protein resides in the cell inner membrane. It carries out the reaction fluoride(in) = fluoride(out). Na(+) is not transported, but it plays an essential structural role and its presence is essential for fluoride channel function. Functionally, fluoride-specific ion channel. Important for reducing fluoride concentration in the cell, thus reducing its toxicity. This chain is Fluoride-specific ion channel FluC, found in Shigella flexneri serotype 5b (strain 8401).